A 395-amino-acid chain; its full sequence is Protein PIN-LIKES 7 (395 aa).

The Lumenal segment spans residues 1–8 (MGFLELLE). Residues 9 to 29 (VASMPIVQVLLISVLGAFLAT) traverse the membrane as a helical segment. Over 30–45 (DYCSLLSADTRRSVNK) the chain is Cytoplasmic. Residues 46–66 (LVFVVFTPCIMFANLAETVTL) traverse the membrane as a helical segment. The Lumenal portion of the chain corresponds to 67-73 (QDIISWW). The chain crosses the membrane as a helical span at residues 74 to 94 (FMPINVGITFLVGGILGWLVV). Residues 95-106 (KLLNPKPQLHGL) are Cytoplasmic-facing. Residues 107-127 (IIATCASGNMGNLMLILVPAI) form a helical membrane-spanning segment. Residues 128-142 (CDEEGSPFGNRSVCR) lie on the Lumenal side of the membrane. Residues 143 to 163 (SIGLSYASFSMALGGFYIWTY) form a helical membrane-spanning segment. Residues 164-232 (SYQLVRSSAT…KDLLHQILEE (69 aa)) lie on the Cytoplasmic side of the membrane. Residues 233–253 (LFAPPTIGAILGFVFGATNWL) form a helical membrane-spanning segment. The Lumenal segment spans residues 254 to 272 (RNLIIGENAPLRVIQDSVK). The chain crosses the membrane as a helical span at residues 273–293 (LLGEGTIPCITLILGGNLIQG). The Cytoplasmic portion of the chain corresponds to 294–302 (LRSSAVKKS). Residues 303 to 323 (VIVGVIIVRYILLPVVGVGVV) form a helical membrane-spanning segment. Residues 324–340 (QLAGNLGYLPPDPLFRY) lie on the Lumenal side of the membrane. The helical transmembrane segment at 341–361 (VLMLQFALPPAMNISTMAQLF) threads the bilayer. At 362-369 (DVAQDECS) the chain is on the cytoplasmic side. Residues 370 to 390 (VIFLWTYLVASLALTVWSTIF) traverse the membrane as a helical segment. Residues 391-395 (LSILS) are Lumenal-facing.

It belongs to the auxin efflux carrier (TC 2.A.69.2) family. Expressed in seedlings, rosette and cauline leaves, stems and flowers.

It is found in the endoplasmic reticulum membrane. Involved in cellular auxin homeostasis by regulating auxin metabolism. Regulates intracellular auxin accumulation at the endoplasmic reticulum and thus auxin availability for nuclear auxin signaling. The chain is Protein PIN-LIKES 7 from Arabidopsis thaliana (Mouse-ear cress).